Reading from the N-terminus, the 484-residue chain is MSTTLLSPFYDIDFLCKTEKSLANLNLNNMLDKKAVGTPVAAAPSSSFTPGFLRRHSASNLHALAHPVPSPGSCSPKFPGAPNGGGSSCGPAGGGGLASYGQLKEPSGGSGTALVTKESKFRDRSFSENGERSQHLLHLQQQQKGGSGSQINSTRYKTELCRPFEESGTCKYGEKCQFAHGFHELRSLTRHPKYKTELCRTFHTIGFCPYGPRCHFIHNADERRPAPSGGGGASGDLRAFGARDALHLGFAREPRPKLHHSLSFSGFPSGHHQPPGGLESPLLLDSPTSRTPPPPSSSASSCSSSASSCSSASAASTPSGAPTCCATAAAAALLYGPGGAEDLLSPGAPCASCSSSGANNAFAFGPELSSLITPLAIQTHNFAAAAAAAYYRNQQQGLTGPAPPPAQPPAAPAPPSPPFGFQLPRRLSESPVFDAPPSPPDSLSDRDSYLSGSLSSGSLSGSESPSLDPGRRLPIFSRLSISDD.

Phosphoserine occurs at positions 57 and 127. The disordered stretch occupies residues 100-152 (YGQLKEPSGGSGTALVTKESKFRDRSFSENGERSQHLLHLQQQQKGGSGSQIN). Basic and acidic residues predominate over residues 117-134 (KESKFRDRSFSENGERSQ). The RNA-binding motif lies at 155-160 (RYKTEL). 2 C3H1-type zinc fingers span residues 155 to 183 (RYKTELCRPFEESGTCKYGEKCQFAHGFH) and 193 to 221 (KYKTELCRTFHTIGFCPYGPRCHFIHNAD). Positions 172–213 (YGEKCQFAHGFHELRSLTRHPKYKTELCRTFHTIGFCPYGPR) are RNA-binding. Disordered stretches follow at residues 261–304 (SLSF…SCSS) and 395–484 (QQGL…ISDD). The span at 401-418 (PAPPPAQPPAAPAPPSPP) shows a compositional bias: pro residues. Low complexity predominate over residues 449 to 468 (YLSGSLSSGSLSGSESPSLD). A phosphoserine; by RPS6KA1 mark is found at S480 and S482.

In terms of assembly, associates with the cytoplasmic CCR4-NOT deadenylase to trigger ARE-containing mRNA deadenylation and decay processes. Interacts with CNOT7; this interaction is inhibited in response to phorbol 12-myristate 13-acetate (PMA) treatment in a p38 MAPK-dependent manner. Interacts with CNOT6L. Phosphorylated by RPS6KA1 at Ser-480 and Ser-482 upon phorbol 12-myristate 13-acetate (PMA) treatment; this phosphorylation results in dissociation of the CCR4-NOT-deadenylase complex and induces p38 MAPK-mediated stabilization of the low-density lipoprotein (LDL) receptor (LDLR) mRNA. Phosphorylation occurs during early preadipocyte differentiation. In terms of tissue distribution, expressed in preadipocytes and adipocytes (at protein level). Expressed at highest level in lymphoid tissues such as thymus, spleen, lung, uterus, ovary, small and large intestine, mammary gland, fat and bone marrow. Expressed at intermediate level in kidney, heart, adrenal, eye and fetal liver. Weakly expressed in brain, skeletal muscle and liver. Expressed through B lymphocyte development. Expressed in superior cervical ganglion (SCG) and dorsal root ganglion (DRG). Expressed in embryonic stem cells (ESCs). Expressed in oocytes.

The protein localises to the nucleus. It localises to the cytoplasm. Zinc-finger RNA-binding protein that destabilizes several cytoplasmic AU-rich element (ARE)-containing mRNA transcripts by promoting their poly(A) tail removal or deadenylation, and hence provide a mechanism for attenuating protein synthesis. Acts as a 3'-untranslated region (UTR) ARE mRNA-binding adapter protein to communicate signaling events to the mRNA decay machinery. Functions by recruiting the CCR4-NOT deadenylase complex and probably other components of the cytoplasmic RNA decay machinery to the bound ARE-containing mRNAs, and hence promotes ARE-mediated mRNA deadenylation and decay processes. Binds to 3'-UTR ARE of numerous mRNAs. Promotes ARE-containing mRNA decay of the low-density lipoprotein (LDL) receptor (LDLR) mRNA in response to phorbol 12-myristate 13-acetate (PMA) treatment in a p38 MAPK-dependent manner. Positively regulates early adipogenesis by promoting ARE-mediated mRNA decay of immediate early genes (IEGs). Plays a role in mature peripheral neuron integrity by promoting ARE-containing mRNA decay of the transcriptional repressor REST mRNA. Plays a role in ovulation and oocyte meiotic maturation by promoting ARE-mediated mRNA decay of the luteinizing hormone receptor LHCGR mRNA. Acts as a negative regulator of erythroid cell differentiation: promotes glucocorticoid-induced self-renewal of erythroid cells by binding mRNAs that are induced or highly expressed during terminal erythroid differentiation and promotes their degradation, preventing erythroid cell differentiation. In association with ZFP36L1 maintains quiescence on developing B lymphocytes by promoting ARE-mediated decay of several mRNAs encoding cell cycle regulators that help B cells progress through the cell cycle, and hence ensuring accurate variable-diversity-joining (VDJ) recombination process and functional immune cell formation. Together with ZFP36L1 is also necessary for thymocyte development and prevention of T-cell acute lymphoblastic leukemia (T-ALL) transformation by promoting ARE-mediated mRNA decay of the oncogenic transcription factor NOTCH1 mRNA. The polypeptide is mRNA decay activator protein ZFP36L2 (Mus musculus (Mouse)).